Reading from the N-terminus, the 290-residue chain is Shikimate dehydrogenase (NADP(+)) (290 aa).

Residues 21–23 (SLS) and Thr68 contribute to the shikimate site. Lys72 (proton acceptor) is an active-site residue. Glu84 provides a ligand contact to NADP(+). Shikimate contacts are provided by Asn93 and Asp108. NADP(+) contacts are provided by residues 132-136 (GYGGA) and Leu230. Tyr232 serves as a coordination point for shikimate. An NADP(+)-binding site is contributed by Gly253.

This sequence belongs to the shikimate dehydrogenase family. Homodimer.

The enzyme catalyses shikimate + NADP(+) = 3-dehydroshikimate + NADPH + H(+). Its pathway is metabolic intermediate biosynthesis; chorismate biosynthesis; chorismate from D-erythrose 4-phosphate and phosphoenolpyruvate: step 4/7. Involved in the biosynthesis of the chorismate, which leads to the biosynthesis of aromatic amino acids. Catalyzes the reversible NADPH linked reduction of 3-dehydroshikimate (DHSA) to yield shikimate (SA). The chain is Shikimate dehydrogenase (NADP(+)) from Synechocystis sp. (strain ATCC 27184 / PCC 6803 / Kazusa).